Consider the following 330-residue polypeptide: MSAVTESVLESIISPVTMSEFLEEYWPVKPLVARGEVERFTSIPGFEKVRTLENVLAIYNNPVMVVGDAVIEESEGITDRFLVSPAEALEWYEKGAALEFDFTDLFIPQVRRWIEKLKAELRLPAGTSSKAIVYAAKNGGGFKAHFDAYTNLIFQIQGEKTWKLAKNENVSNPMQHYDLSEAPYYPDDLQSYWKGDPPKEDLPDAEIVNLTPGTMLYLPRGLWHSTKSDQATLALNITFGQPAWLDLMLAALRKKLISDNRFRELAVNHQSLHESSKSELNGYLESLIQTLSENAETLTPEQIFQSQDSDFDPYQSTQLVFRQLLTSYKF.

Residues 96–256 (AALEFDFTDL…LMLAALRKKL (161 aa)) form the JmjC domain. H145, D147, and H224 together coordinate Fe cation.

The protein belongs to the ROX family. The cofactor is Fe(2+).

This is an uncharacterized protein from Bacillus subtilis (strain 168).